The following is a 213-amino-acid chain: ATP phosphoribosyltransferase (213 aa).

This sequence belongs to the ATP phosphoribosyltransferase family. Short subfamily. Heteromultimer composed of HisG and HisZ subunits.

The protein resides in the cytoplasm. It catalyses the reaction 1-(5-phospho-beta-D-ribosyl)-ATP + diphosphate = 5-phospho-alpha-D-ribose 1-diphosphate + ATP. Its pathway is amino-acid biosynthesis; L-histidine biosynthesis; L-histidine from 5-phospho-alpha-D-ribose 1-diphosphate: step 1/9. Functionally, catalyzes the condensation of ATP and 5-phosphoribose 1-diphosphate to form N'-(5'-phosphoribosyl)-ATP (PR-ATP). Has a crucial role in the pathway because the rate of histidine biosynthesis seems to be controlled primarily by regulation of HisG enzymatic activity. The sequence is that of ATP phosphoribosyltransferase from Chromobacterium violaceum (strain ATCC 12472 / DSM 30191 / JCM 1249 / CCUG 213 / NBRC 12614 / NCIMB 9131 / NCTC 9757 / MK).